Reading from the N-terminus, the 199-residue chain is 3-isopropylmalate dehydratase small subunit (199 aa).

Belongs to the LeuD family. LeuD type 1 subfamily. Heterodimer of LeuC and LeuD.

It carries out the reaction (2R,3S)-3-isopropylmalate = (2S)-2-isopropylmalate. It participates in amino-acid biosynthesis; L-leucine biosynthesis; L-leucine from 3-methyl-2-oxobutanoate: step 2/4. In terms of biological role, catalyzes the isomerization between 2-isopropylmalate and 3-isopropylmalate, via the formation of 2-isopropylmaleate. The chain is 3-isopropylmalate dehydratase small subunit from Bacillus licheniformis (strain ATCC 14580 / DSM 13 / JCM 2505 / CCUG 7422 / NBRC 12200 / NCIMB 9375 / NCTC 10341 / NRRL NRS-1264 / Gibson 46).